A 46-amino-acid polypeptide reads, in one-letter code: MTEQKPKPSCHNVMVGNYVPTASDRAANRTLGFGLVTNIINGGLDC.

It belongs to the glycosyl hydrolase 19 family. Chitinase class I subfamily.

It carries out the reaction Random endo-hydrolysis of N-acetyl-beta-D-glucosaminide (1-&gt;4)-beta-linkages in chitin and chitodextrins.. Functionally, defense against chitin-containing fungal and bacterial pathogens. The chain is Endochitinase 2 from Arachis hypogaea (Peanut).